The chain runs to 510 residues: GMP synthase [glutamine-hydrolyzing] (510 aa).

A Glutamine amidotransferase type-1 domain is found at 5 to 195; that stretch reads LVIVLDFGGQ…LFNIADLSAD (191 aa). Cysteine 82 (nucleophile) is an active-site residue. Catalysis depends on residues histidine 169 and glutamate 171. A GMPS ATP-PPase domain is found at 196–385; it reads WTMGSYIEET…LGLHREIVER (190 aa). Position 223 to 229 (223 to 229) interacts with ATP; the sequence is SGGIDST.

Homodimer.

The catalysed reaction is XMP + L-glutamine + ATP + H2O = GMP + L-glutamate + AMP + diphosphate + 2 H(+). It participates in purine metabolism; GMP biosynthesis; GMP from XMP (L-Gln route): step 1/1. Catalyzes the synthesis of GMP from XMP. This is GMP synthase [glutamine-hydrolyzing] from Natranaerobius thermophilus (strain ATCC BAA-1301 / DSM 18059 / JW/NM-WN-LF).